A 323-amino-acid polypeptide reads, in one-letter code: Thymidylate synthase (323 aa).

DUMP contacts are provided by residues R21 and 172–173; that span reads RR. Residue C192 is the Nucleophile of the active site. Residues 214-217, N225, and 255-257 contribute to the dUMP site; these read RSND and HVY. D217 contacts (6R)-5,10-methylene-5,6,7,8-tetrahydrofolate. A322 contacts (6R)-5,10-methylene-5,6,7,8-tetrahydrofolate.

It belongs to the thymidylate synthase family. Bacterial-type ThyA subfamily. As to quaternary structure, homodimer.

Its subcellular location is the cytoplasm. The enzyme catalyses dUMP + (6R)-5,10-methylene-5,6,7,8-tetrahydrofolate = 7,8-dihydrofolate + dTMP. It participates in pyrimidine metabolism; dTTP biosynthesis. In terms of biological role, catalyzes the reductive methylation of 2'-deoxyuridine-5'-monophosphate (dUMP) to 2'-deoxythymidine-5'-monophosphate (dTMP) while utilizing 5,10-methylenetetrahydrofolate (mTHF) as the methyl donor and reductant in the reaction, yielding dihydrofolate (DHF) as a by-product. This enzymatic reaction provides an intracellular de novo source of dTMP, an essential precursor for DNA biosynthesis. In Pseudomonas putida (strain ATCC 47054 / DSM 6125 / CFBP 8728 / NCIMB 11950 / KT2440), this protein is Thymidylate synthase.